Consider the following 356-residue polypeptide: Protein pelota homolog (356 aa).

Belongs to the eukaryotic release factor 1 family. Pelota subfamily. Monomer. A divalent metal cation serves as cofactor.

The protein resides in the cytoplasm. Functionally, may function in recognizing stalled ribosomes, interact with stem-loop structures in stalled mRNA molecules, and effect endonucleolytic cleavage of the mRNA. May play a role in the release non-functional ribosomes and degradation of damaged mRNAs. Has endoribonuclease activity. The polypeptide is Protein pelota homolog (Desulfurococcus amylolyticus (strain DSM 18924 / JCM 16383 / VKM B-2413 / 1221n) (Desulfurococcus kamchatkensis)).